Here is a 310-residue protein sequence, read N- to C-terminus: Malate dehydrogenase (310 aa).

NAD(+)-binding positions include 7–12 (GAGNVG) and aspartate 32. Residues arginine 81 and arginine 87 each coordinate substrate. Residues asparagine 94 and 117-119 (VSN) each bind NAD(+). Residues asparagine 119 and arginine 150 each coordinate substrate. Histidine 174 serves as the catalytic Proton acceptor.

It belongs to the LDH/MDH superfamily. MDH type 3 family. In terms of assembly, homotetramer; arranged as a dimer of dimers.

The catalysed reaction is (S)-malate + NAD(+) = oxaloacetate + NADH + H(+). Its function is as follows. Catalyzes the reversible oxidation of malate to oxaloacetate. In Chlorobaculum parvum (strain DSM 263 / NCIMB 8327) (Chlorobium vibrioforme subsp. thiosulfatophilum), this protein is Malate dehydrogenase.